The primary structure comprises 142 residues: MKIIIKNKDAFFNYEILEKYKAGLILKGWEVKSIRENKVQLKGAFITFKNDEAYITNMHISQYMSVKGNELEPRKLLLNKHEIRHIQDKKNRNSLAVIPLNLFWDNNYIKLEIALAKGKTKADKRHRILEKDVRKHLKKITY.

It belongs to the SmpB family.

It is found in the cytoplasm. In terms of biological role, required for rescue of stalled ribosomes mediated by trans-translation. Binds to transfer-messenger RNA (tmRNA), required for stable association of tmRNA with ribosomes. tmRNA and SmpB together mimic tRNA shape, replacing the anticodon stem-loop with SmpB. tmRNA is encoded by the ssrA gene; the 2 termini fold to resemble tRNA(Ala) and it encodes a 'tag peptide', a short internal open reading frame. During trans-translation Ala-aminoacylated tmRNA acts like a tRNA, entering the A-site of stalled ribosomes, displacing the stalled mRNA. The ribosome then switches to translate the ORF on the tmRNA; the nascent peptide is terminated with the 'tag peptide' encoded by the tmRNA and targeted for degradation. The ribosome is freed to recommence translation, which seems to be the essential function of trans-translation. This is SsrA-binding protein from Mycoplasma mobile (strain ATCC 43663 / 163K / NCTC 11711) (Mesomycoplasma mobile).